A 2869-amino-acid polypeptide reads, in one-letter code: uncharacterized protein (2869 aa).

Residues 1 to 10 are compositionally biased toward low complexity; it reads MNINRNNIND. Disordered stretches follow at residues 1-132, 171-349, 380-485, 498-517, 690-812, 860-1074, 1108-1175, 1188-1216, 1224-1243, 1340-1448, 1476-1704, 1731-1832, and 2725-2773; these read MNIN…SSNK, NNNN…DNYR, FNES…TSSS, KEKH…KPKK, NQNQ…NQNQ, INNN…INSN, INNI…NSNS, SNSN…VDVD, VFIV…SVKT, ESNS…GNNI, IDNC…SNYY, NSNS…NEGF, and DRVR…NNNE. Residues 14-25 are compositionally biased toward polar residues; the sequence is HSTSFNDNFDSF. 5 stretches are compositionally biased toward low complexity: residues 26 to 124, 171 to 348, 388 to 414, 421 to 446, and 454 to 478; these read GNQN…NPKN, NNNN…YDNY, NNNT…LNNN, YYDN…QTNK, and KNNN…NSNN. A compositionally biased stretch (basic and acidic residues) spans 505 to 514; the sequence is HENGDISESK. Composition is skewed to low complexity over residues 690–707 and 714–749; these read NQNQ…QNHQ and PQRQ…NQDQ. A compositionally biased stretch (basic and acidic residues) spans 750-763; it reads YQDHDHEHEHDHDQ. Positions 764-781 are enriched in low complexity; the sequence is NQNQNQNQHQSRNQNQDQ. The span at 782-795 shows a compositional bias: basic and acidic residues; the sequence is YQDHDHEHEHDHDQ. 5 stretches are compositionally biased toward low complexity: residues 796–812, 860–891, 898–911, 921–991, and 1000–1074; these read NQNQ…NQNQ, INNN…QSQN, DNRI…SSRD, CDFN…SFNN, and NNHN…INSN. Positions 1188–1212 are enriched in low complexity; the sequence is SNSNGFNNNNSNDQRNIDSSSNSDI. A compositionally biased stretch (polar residues) spans 1230–1243; that stretch reads TSSNKSNRASSVKT. Low complexity-rich tracts occupy residues 1377-1448 and 1476-1639; these read DNGN…GNNI and IDNC…NDND. Residues 1640–1659 show a composition bias toward acidic residues; that stretch reads IGNDFDNDNDNDSYIDDDNN. 3 stretches are compositionally biased toward low complexity: residues 1660-1704, 1731-1823, and 2739-2754; these read VYDN…SNYY, NSNS…NNNS, and SSSG…SGGS. The segment covering 2758–2773 has biased composition (acidic residues); the sequence is NLDDSENESDSENNNE.

This is an uncharacterized protein from Dictyostelium discoideum (Social amoeba).